Reading from the N-terminus, the 1987-residue chain is Transcriptional activator DEMETER (1987 aa).

3 disordered regions span residues 246-378 (TGHE…NKSP), 392-415 (DLEN…SSGA), and 793-901 (MPPE…GPSG). Over residues 258 to 277 (SMQSIMDSSAVNATEATEQN) the composition is skewed to polar residues. Over residues 341–364 (ATQEKVKSKETGSAKKKNLKESAT) the composition is skewed to basic and acidic residues. Over residues 813-829 (NTASISKGASKGNSSPV) the composition is skewed to polar residues. Residues 844–855 (PAKKGRAGRKKS) are compositionally biased toward basic residues. Residues 955 to 1054 (KVDIDDETTR…AFMSLAARFP (100 aa)) are DEMETER. 2 disordered regions span residues 1324 to 1351 (LPGM…QDEM) and 1439 to 1471 (TLAD…KNNM). Composition is skewed to basic and acidic residues over residues 1338–1351 (EHQD…QDEM) and 1452–1469 (SLRK…RNKN). Residues Cys-1629, Cys-1636, Cys-1639, and Cys-1645 each contribute to the [4Fe-4S] cluster site.

The protein belongs to the DNA glycosylase family. DEMETER subfamily. [4Fe-4S] cluster serves as cofactor. Mainly expressed in immature flower buds, then decreases as the flower matures. Expressed in the ovule carpels, but not expressed in pollen stamens. Expressed in developing and mature ovules (stages 12-14), then strongly decreases after fertilization.

The protein localises to the nucleus. Its function is as follows. Transcriptional activator involved in gene imprinting. Catalyzes the release of 5-methylcytosine (5-meC) from DNA by a glycosylase/lyase mechanism. Allows the expression of the maternal copy of the imprinted MEA gene before fertilization, possibly by antagonizing or suppressing DNA methylation on target promoter. Probably acts by nicking the MEA promoter. Required for stable reproducible patterns of floral and vegetative development. The chain is Transcriptional activator DEMETER (DME) from Arabidopsis thaliana (Mouse-ear cress).